Reading from the N-terminus, the 361-residue chain is Chorismate synthase (361 aa).

Arginine 48 lines the NADP(+) pocket. FMN contacts are provided by residues 126–128, glycine 286, 301–305, and arginine 328; these read RFS and KPTPS.

It belongs to the chorismate synthase family. Requires FMNH2 as cofactor.

It catalyses the reaction 5-O-(1-carboxyvinyl)-3-phosphoshikimate = chorismate + phosphate. The protein operates within metabolic intermediate biosynthesis; chorismate biosynthesis; chorismate from D-erythrose 4-phosphate and phosphoenolpyruvate: step 7/7. Catalyzes the anti-1,4-elimination of the C-3 phosphate and the C-6 proR hydrogen from 5-enolpyruvylshikimate-3-phosphate (EPSP) to yield chorismate, which is the branch point compound that serves as the starting substrate for the three terminal pathways of aromatic amino acid biosynthesis. This reaction introduces a second double bond into the aromatic ring system. This is Chorismate synthase from Korarchaeum cryptofilum (strain OPF8).